The sequence spans 512 residues: Gamma-aminobutyric acid receptor subunit beta-2 (512 aa).

The signal sequence occupies residues 1–25 (MWRVRKRGYFGIWSFPLIIAAVCAQ). Over 26-241 (SVNDPSNMSL…LSLSFKLKRN (216 aa)) the chain is Extracellular. N-linked (GlcNAc...) asparagine glycosylation is found at Asn-32 and Asn-104. Tyr-121 is a binding site for histamine. A disulfide bridge connects residues Cys-160 and Cys-174. N-linked (GlcNAc...) asparagine glycosylation is present at Asn-173. Histamine is bound by residues 180-181 (SY) and Thr-226. Tyr-181 and Thr-226 together coordinate 4-aminobutanoate. A helical transmembrane segment spans residues 242–262 (IGYFILQTYMPSILITILSWV). The Cytoplasmic segment spans residues 263 to 272 (SFWINYDASA). A helical transmembrane segment spans residues 273–292 (ARVALGITTVLTMTTINTHL). Over 293–310 (RETLPKIPYVKAIDMYLM) the chain is Extracellular. A helical membrane pass occupies residues 311–331 (GCFVFVFMALLEYALVNYIFF). The Cytoplasmic portion of the chain corresponds to 332–490 (GRGPQRQKKA…LTDVNAIDRW (159 aa)). Tyr-441 bears the Phosphotyrosine mark. A helical membrane pass occupies residues 491–511 (SRIFFPVVFSFFNIVYWLYYV). Residue Asn-512 is a topological domain, extracellular.

This sequence belongs to the ligand-gated ion channel (TC 1.A.9) family. Gamma-aminobutyric acid receptor (TC 1.A.9.5) subfamily. GABRB2 sub-subfamily. In terms of assembly, heteropentamer, formed by a combination of alpha (GABRA1-6), beta (GABRB1-3), gamma (GABRG1-3), delta (GABRD), epsilon (GABRE), rho (GABRR1-3), pi (GABRP) and theta (GABRQ) chains, each subunit exhibiting distinct physiological and pharmacological properties. Interacts with UBQLN1. May interact with KIF21B. Identified in a complex of 720 kDa composed of LHFPL4, NLGN2, GABRA1, GABRB2, GABRG2 and GABRB3. In terms of tissue distribution, isoform 1 and isoform 2 show reduced expression in schizophrenic brain. Isoform 3 shows increased expression in schizophrenic and bipolar disorder brains while isoform 4 shows reduced expression.

The protein localises to the postsynaptic cell membrane. It is found in the cell membrane. The protein resides in the cytoplasmic vesicle membrane. It carries out the reaction chloride(in) = chloride(out). With respect to regulation, allosterically activated by benzodiazepines. Allosterically activated by the anesthetic etomidate. Inhibited by the antagonist bicuculline. Potentiated by histamine. In terms of biological role, beta subunit of the heteropentameric ligand-gated chloride channel gated by gamma-aminobutyric acid (GABA), a major inhibitory neurotransmitter in the brain. GABA-gated chloride channels, also named GABA(A) receptors (GABAAR), consist of five subunits arranged around a central pore and contain GABA active binding site(s) located at the alpha and beta subunit interface(s). When activated by GABA, GABAARs selectively allow the flow of chloride anions across the cell membrane down their electrochemical gradient. Chloride influx into the postsynaptic neuron following GABAAR opening decreases the neuron ability to generate a new action potential, thereby reducing nerve transmission. GABAARs containing alpha-1 and beta-2 or -3 subunits exhibit synaptogenic activity; the gamma-2 subunit being necessary but not sufficient to induce rapid synaptic contacts formation. Extrasynaptic beta-2 receptors contribute to the tonic GABAergic inhibition. Beta-containing GABAARs can simultaneously bind GABA and histamine where histamine binds at the interface of two neighboring beta subunits, which may be involved in the regulation of sleep and wakefulness. In Homo sapiens (Human), this protein is Gamma-aminobutyric acid receptor subunit beta-2.